The following is a 130-amino-acid chain: Small ribosomal subunit protein uS9 (130 aa).

Belongs to the universal ribosomal protein uS9 family.

This chain is Small ribosomal subunit protein uS9, found in Chromobacterium violaceum (strain ATCC 12472 / DSM 30191 / JCM 1249 / CCUG 213 / NBRC 12614 / NCIMB 9131 / NCTC 9757 / MK).